A 104-amino-acid chain; its full sequence is Large ribosomal subunit protein uL24 (104 aa).

This sequence belongs to the universal ribosomal protein uL24 family. Part of the 50S ribosomal subunit.

Functionally, one of two assembly initiator proteins, it binds directly to the 5'-end of the 23S rRNA, where it nucleates assembly of the 50S subunit. Its function is as follows. One of the proteins that surrounds the polypeptide exit tunnel on the outside of the subunit. This Cronobacter sakazakii (strain ATCC BAA-894) (Enterobacter sakazakii) protein is Large ribosomal subunit protein uL24.